The chain runs to 362 residues: Dihydroorotate dehydrogenase (quinone) (362 aa).

FMN contacts are provided by residues alanine 62–lysine 66 and threonine 86. Lysine 66 is a substrate binding site. Asparagine 111 to phenylalanine 115 lines the substrate pocket. FMN-binding residues include asparagine 139 and asparagine 170. Asparagine 170 is a substrate binding site. The active-site Nucleophile is the serine 173. Asparagine 175 provides a ligand contact to substrate. 2 residues coordinate FMN: lysine 215 and serine 243. Asparagine 244–threonine 245 is a binding site for substrate. FMN is bound by residues glycine 266, glycine 295, and tyrosine 316 to serine 317.

This sequence belongs to the dihydroorotate dehydrogenase family. Type 2 subfamily. As to quaternary structure, monomer. FMN is required as a cofactor.

The protein localises to the cell membrane. The enzyme catalyses (S)-dihydroorotate + a quinone = orotate + a quinol. It participates in pyrimidine metabolism; UMP biosynthesis via de novo pathway; orotate from (S)-dihydroorotate (quinone route): step 1/1. Functionally, catalyzes the conversion of dihydroorotate to orotate with quinone as electron acceptor. The protein is Dihydroorotate dehydrogenase (quinone) of Rhizobium rhizogenes (strain K84 / ATCC BAA-868) (Agrobacterium radiobacter).